A 453-amino-acid chain; its full sequence is Phosphatidylserine decarboxylase proenzyme 1, mitochondrial (453 aa).

The transit peptide at 1–29 directs the protein to the mitochondrion; that stretch reads MKPRFPQNVYFLARYSYLRRFQHSQRRTF. The Mitochondrial matrix segment spans residues 30 to 74; sequence SSFLNNIRSNYSGARASPLGGSSGAGAGAGGGGTGDSKGNAFLVP. A helical transmembrane segment spans residues 75–93; the sequence is GATMATILMLGALHARRLY. At 94 to 453 the chain is on the mitochondrial intermembrane side; it reads EDKKIEEKRE…GQALGRWKEE (360 aa). Residues Asp-199, His-296, and Ser-408 each act as charge relay system; for autoendoproteolytic cleavage activity in the active site. Ser-408 functions as the Schiff-base intermediate with substrate; via pyruvic acid; for decarboxylase activity in the catalytic mechanism. Pyruvic acid (Ser); by autocatalysis is present on Ser-408.

The protein belongs to the phosphatidylserine decarboxylase family. PSD-B subfamily. Eukaryotic type I sub-subfamily. In terms of assembly, heterodimer of a large membrane-associated beta subunit and a small pyruvoyl-containing alpha subunit. The cofactor is pyruvate. Is synthesized initially as an inactive proenzyme. Formation of the active enzyme involves a self-maturation process in which the active site pyruvoyl group is generated from an internal serine residue via an autocatalytic post-translational modification. Two non-identical subunits are generated from the proenzyme in this reaction, and the pyruvate is formed at the N-terminus of the alpha chain, which is derived from the carboxyl end of the proenzyme. The autoendoproteolytic cleavage occurs by a canonical serine protease mechanism, in which the side chain hydroxyl group of the serine supplies its oxygen atom to form the C-terminus of the beta chain, while the remainder of the serine residue undergoes an oxidative deamination to produce ammonia and the pyruvoyl prosthetic group on the alpha chain. During this reaction, the Ser that is part of the protease active site of the proenzyme becomes the pyruvoyl prosthetic group, which constitutes an essential element of the active site of the mature decarboxylase. As to expression, expressed in roots, leaves, stems and flowers.

Its subcellular location is the mitochondrion. It is found in the mitochondrion inner membrane. The enzyme catalyses a 1,2-diacyl-sn-glycero-3-phospho-L-serine + H(+) = a 1,2-diacyl-sn-glycero-3-phosphoethanolamine + CO2. It functions in the pathway phospholipid metabolism; phosphatidylethanolamine biosynthesis; phosphatidylethanolamine from CDP-diacylglycerol: step 2/2. Catalyzes the formation of phosphatidylethanolamine (PtdEtn) from phosphatidylserine (PtdSer). Plays a central role in phospholipid metabolism and in the interorganelle trafficking of phosphatidylserine. Contributes only to a minor proportion of PtdEtn production. The sequence is that of Phosphatidylserine decarboxylase proenzyme 1, mitochondrial (PSD1) from Arabidopsis thaliana (Mouse-ear cress).